Consider the following 219-residue polypeptide: MSEGEAQAPRGRGLPPDVLAEQVELWWSQQPRRSALCFAVAVGLVAGCGAGGVALLSSTSSRSGEWRLAVGTALCLLALLVLVKQLMSSAVQDMNCIRQPHHVALLRSGGGADALVVLLSGLVLLVTGLTLAGLAAAPAPARPLAAMLSVGITLAASGALLLLGLLLYQVAVSGHCPPARTAAPTTRSDRSGNGSVFSISGQLSAGQRHETTSSIASLI.

4 helical membrane passes run 36 to 56, 68 to 88, 114 to 134, and 147 to 167; these read LCFA…VALL, LAVG…QLMS, ALVV…LAGL, and MLSV…GLLL.

The protein localises to the membrane. This chain is Transmembrane protein 125 (TMEM125), found in Bos taurus (Bovine).